The chain runs to 994 residues: Chloride channel protein 1 (994 aa).

The Cytoplasmic portion of the chain corresponds to 1-118 (MERSQSQRHG…VLRRKLGEDW (118 aa)). A helical transmembrane segment spans residues 119 to 150 (IFLVLLGLLMALVSWCMDYVSAKSLQAYKWTY). Over 151 to 158 (AQMKPSLP) the chain is Extracellular. A helical membrane pass occupies residues 159 to 179 (LQYLAWVTFPLILILFSALFC). Residues 180-183 (QLIS) are Cytoplasmic-facing. The segment at residues 184–189 (PQAVGS) is an intramembrane region (note=Loop between two helices). The Selectivity filter part_1 signature appears at 188-192 (GSGIP). Serine 189 is a chloride binding site. An intramembrane region (helical) is located at residues 190-195 (GIPEMK). The Cytoplasmic segment spans residues 196–208 (TILRGVVLKEYLT). The helical intramembrane region spans 209–224 (LKAFVAKVVALTAGLG). Residues 225–230 (SGIPVG) constitute an intramembrane region (note=Loop between two helices). A Selectivity filter part_2 motif is present at residues 230-234 (GKEGP). The helical intramembrane region spans 231-246 (KEGPFVHIASICAAVL). Topologically, residues 247–268 (SKFMSMFSGVYEQPYYYTDILT) are cytoplasmic. Intramembrane regions (helical) lie at residues 269 to 280 (VGCAVGVGCCFG) and 281 to 290 (TPLGGVLFSI). The Cytoplasmic portion of the chain corresponds to 291–301 (EVTSTYFAVRN). The chain crosses the membrane as a helical span at residues 302 to 321 (YWRGFFAATFSAFVFRVLAV). Residues 322–347 (WNKDAVTITALFRTNFRMDFPFDLKE) lie on the Extracellular side of the membrane. Residues 348–376 (LPAFAVIGICCGFLGAVFVYLHRQVMLGV) form a helical membrane-spanning segment. The Cytoplasmic portion of the chain corresponds to 377–390 (RKHKCLSQFLAKHR). Residues 391 to 408 (LLYPGIVTFVIASLTFPP) form a helical membrane-spanning segment. Residues 409–414 (GMGQFM) are Extracellular-facing. Positions 415–418 (AGEL) form an intramembrane region, note=Loop between two helices. Residues 419–426 (MPREAIST) constitute an intramembrane region (helical). Residues 427-457 (LFDNNTWVKHIGDPQSLGQSAVWLHPQVNVI) are Extracellular-facing. The segment at residues 458 to 475 (IIILLFFVMKFWMSIVAT) is an intramembrane region (helical). Residues 476–482 (TMPIPCG) constitute an intramembrane region (note=Loop between two helices). The Selectivity filter part_3 motif lies at 482–486 (GGFMP). An intramembrane region (helical) is located at residues 483–498 (GFMPVFVLGAAFGRLV). Phenylalanine 484 contributes to the chloride binding site. At 499-521 (GEIMAMLFPEGILFDDIIYKILP) the chain is on the extracellular side. The segment at residues 522–538 (GGYAVIGAAALTGAVSH) is an intramembrane region (helical). Positions 539 to 540 (TV) form an intramembrane region, note=Loop between two helices. The segment at residues 541-554 (STAVICFELTGQIA) is an intramembrane region (helical). Over 555-557 (HIL) the chain is Extracellular. Residues 558–571 (PMMVAVILANMVAQ) constitute an intramembrane region (helical). Residues 572-575 (SLQP) constitute an intramembrane region (note=Loop between two helices). Residues 576–578 (SLY) constitute an intramembrane region (helical). Residue tyrosine 578 coordinates chloride. At 579-994 (DSIIQVKKLP…DEEDEDELIL (416 aa)) the chain is on the cytoplasmic side. One can recognise a CBS 1 domain in the interval 609 to 668 (MVRDVKFVSASCTYGELRNLLQATTVKTLPLVDSKDSMILLGSVERSELQSLLQRHLCAE). Residues 710–770 (EDEDEDLSRK…PEASDSADQR (61 aa)) are disordered. A compositionally biased stretch (pro residues) spans 725 to 739 (TPAPPPPSPPPPPSQ). The CBS 2 domain occupies 827–882 (IDQSPFQLVEQTTLHKTHTLFSLLGLHLAYVTSMGKLRGVLALEELQKAIEGHTKS). Disordered stretches follow at residues 886 to 954 (LRPP…ARAE) and 971 to 994 (ELADILHGPSLRSTDEEDEDELIL). Serine 892 bears the Phosphoserine mark. The segment covering 933 to 943 (PETPVPPPSPE) has biased composition (pro residues). The segment covering 985–994 (DEEDEDELIL) has biased composition (acidic residues).

The protein belongs to the chloride channel (TC 2.A.49) family. ClC-1/CLCN1 subfamily. As to quaternary structure, homodimer. In terms of tissue distribution, predominantly expressed in skeletal muscles.

Its subcellular location is the cell membrane. It localises to the sarcolemma. The protein resides in the T-tubule. It catalyses the reaction chloride(in) = chloride(out). It carries out the reaction thiocyanate(in) = thiocyanate(out). The catalysed reaction is bromide(in) = bromide(out). The enzyme catalyses nitrate(in) = nitrate(out). It catalyses the reaction iodide(out) = iodide(in). Its activity is regulated as follows. Modulated by membrane voltage with depolarization favouring channel opening and hyperpolarization favouring channel closure. Inhibited by acidic pH and ATP binding due to a shift of voltage dependence of common gating to more positive voltages. Inhibited by 9-anthracene-carboxylic. Voltage-gated chloride channel involved in skeletal muscle excitability. Generates most of the plasma membrane chloride conductance in skeletal muscle fibers, stabilizes the resting membrane potential and contributes to the repolarization phase during action potential firing. Forms a homodimeric channel where each subunit has its own ion conduction pathway. Conducts double-barreled currents controlled by two types of gates, two fast glutamate gates that control each subunit independently and a slow common gate that opens and shuts off both subunits simultaneously. Has a significant open probability at muscle resting potential and is further activated upon membrane depolarization. Permeable to small monovalent anions with ion selectivity for chloride &gt; thiocyanate &gt; bromide &gt; nitrate &gt; iodide. The chain is Chloride channel protein 1 (Clcn1) from Mus musculus (Mouse).